The primary structure comprises 274 residues: Large ribosomal subunit protein uL2 (274 aa).

The disordered stretch occupies residues 195-274 (VGNSDHGLES…SKYIIERRKK (80 aa)). 2 stretches are compositionally biased toward basic residues: residues 209-220 (GRSRWQGRRPRN) and 244-264 (PRSRKGLYAKGLKTRAPKKQS).

This sequence belongs to the universal ribosomal protein uL2 family. Part of the 50S ribosomal subunit. Forms a bridge to the 30S subunit in the 70S ribosome.

Functionally, one of the primary rRNA binding proteins. Required for association of the 30S and 50S subunits to form the 70S ribosome, for tRNA binding and peptide bond formation. It has been suggested to have peptidyltransferase activity; this is somewhat controversial. Makes several contacts with the 16S rRNA in the 70S ribosome. The polypeptide is Large ribosomal subunit protein uL2 (Bacteroides fragilis (strain ATCC 25285 / DSM 2151 / CCUG 4856 / JCM 11019 / LMG 10263 / NCTC 9343 / Onslow / VPI 2553 / EN-2)).